We begin with the raw amino-acid sequence, 993 residues long: Replication protein 1a (993 aa).

A methyltransferase region spans residues 51–409 (NVLGVKDSEV…TIVINGMSMQ (359 aa)). Residues 72–290 (HLTQQEFAPH…HDWENIKSFL (219 aa)) enclose the Alphavirus-like MT domain. Positions 538 to 561 (AQPVSEVSDSPETSSQTPDDTADV) are disordered. Residues 542–556 (SEVSDSPETSSQTPD) are compositionally biased toward polar residues. Residues 687 to 838 (CVICNSESLS…KIIPDETSDA (152 aa)) form the (+)RNA virus helicase ATP-binding domain. The segment at 712–975 (VDGVAGCGKT…LTRHKVTFRY (264 aa)) is ATP-dependent helicase. Position 714–721 (714–721 (GVAGCGKT)) interacts with ATP. The region spanning 839-993 (DTTFRSPQDV…DLIAECVARA (155 aa)) is the (+)RNA virus helicase C-terminal domain.

This sequence belongs to the bromoviridae replication protein 1a family. Interacts with RNA-directed RNA polymerase 2a.

The protein resides in the host endoplasmic reticulum membrane. Functionally, involved in the virus replication. Contains a helicase domain and a methyltransferase domain. The methyltransferase domain is probably involved in viral RNA capping. Involved in the formation of ER membrane spherular invaginations in which RNA replication complexes form. This chain is Replication protein 1a, found in Cucumber mosaic virus (strain FNY) (CMV).